The sequence spans 87 residues: U3-theraphotoxin-Hhn1a 7 (87 aa).

Positions Met-1–Ala-24 are cleaved as a signal peptide. A propeptide spanning residues Ser-25–Arg-52 is cleaved from the precursor. Disulfide bonds link Cys-54/Cys-67, Cys-61/Cys-72, and Cys-66/Cys-79.

This sequence belongs to the neurotoxin 10 (Hwtx-1) family. 51 (Hntx-8) subfamily. Hntx-8 sub-subfamily. Expressed by the venom gland.

The protein localises to the secreted. Its function is as follows. Ion channel inhibitor. The polypeptide is U3-theraphotoxin-Hhn1a 7 (Cyriopagopus hainanus (Chinese bird spider)).